A 478-amino-acid polypeptide reads, in one-letter code: Glucose-6-phosphate 1-dehydrogenase (478 aa).

NADP(+)-binding positions include R48, 86-87 (DF), and K142. Substrate contacts are provided by H172, K176, E210, and D229. H234 (proton acceptor) is an active-site residue. Residues K334 and K339 each coordinate substrate.

This sequence belongs to the glucose-6-phosphate dehydrogenase family.

It catalyses the reaction D-glucose 6-phosphate + NADP(+) = 6-phospho-D-glucono-1,5-lactone + NADPH + H(+). It functions in the pathway carbohydrate degradation; pentose phosphate pathway; D-ribulose 5-phosphate from D-glucose 6-phosphate (oxidative stage): step 1/3. In terms of biological role, catalyzes the oxidation of glucose 6-phosphate to 6-phosphogluconolactone. The chain is Glucose-6-phosphate 1-dehydrogenase from Borreliella burgdorferi (strain ATCC 35210 / DSM 4680 / CIP 102532 / B31) (Borrelia burgdorferi).